Consider the following 378-residue polypeptide: UPF0754 membrane protein BC_0879 (378 aa).

A helical membrane pass occupies residues 357–377 (YLGALLGGMIGLVQGLLLLFL).

This sequence belongs to the UPF0754 family.

It localises to the cell membrane. This Bacillus cereus (strain ATCC 14579 / DSM 31 / CCUG 7414 / JCM 2152 / NBRC 15305 / NCIMB 9373 / NCTC 2599 / NRRL B-3711) protein is UPF0754 membrane protein BC_0879.